The sequence spans 1262 residues: ATP-dependent helicase/nuclease subunit A (1262 aa).

One can recognise a UvrD-like helicase ATP-binding domain in the interval 5–476 (FSFTPSQDQA…IVLAENFRSM (472 aa)). An ATP-binding site is contributed by 26–33 (ASAGSGKT). Residues 515–808 (DTVTSTAELL…SVMTIHGSKG (294 aa)) form the UvrD-like helicase C-terminal domain.

The protein belongs to the helicase family. AddA subfamily. Heterodimer of AddA and AddB/RexB. Mg(2+) is required as a cofactor.

The enzyme catalyses Couples ATP hydrolysis with the unwinding of duplex DNA by translocating in the 3'-5' direction.. It carries out the reaction ATP + H2O = ADP + phosphate + H(+). Its function is as follows. The heterodimer acts as both an ATP-dependent DNA helicase and an ATP-dependent, dual-direction single-stranded exonuclease. Recognizes the chi site generating a DNA molecule suitable for the initiation of homologous recombination. The AddA nuclease domain is required for chi fragment generation; this subunit has the helicase and 3' -&gt; 5' nuclease activities. This chain is ATP-dependent helicase/nuclease subunit A, found in Levilactobacillus brevis (strain ATCC 367 / BCRC 12310 / CIP 105137 / JCM 1170 / LMG 11437 / NCIMB 947 / NCTC 947) (Lactobacillus brevis).